We begin with the raw amino-acid sequence, 126 residues long: Ribosome-binding factor A (126 aa).

Belongs to the RbfA family. Monomer. Binds 30S ribosomal subunits, but not 50S ribosomal subunits or 70S ribosomes.

It is found in the cytoplasm. One of several proteins that assist in the late maturation steps of the functional core of the 30S ribosomal subunit. Associates with free 30S ribosomal subunits (but not with 30S subunits that are part of 70S ribosomes or polysomes). Required for efficient processing of 16S rRNA. May interact with the 5'-terminal helix region of 16S rRNA. The polypeptide is Ribosome-binding factor A (Haemophilus ducreyi (strain 35000HP / ATCC 700724)).